Reading from the N-terminus, the 327-residue chain is Zinc transport protein ZntB (327 aa).

Residues 1-273 (MEGIKGSEVN…SRRTYTMSLM (273 aa)) lie on the Cytoplasmic side of the membrane. Residues 274-294 (AMVFLPSTFLTGLFGVNLGGI) form a helical membrane-spanning segment. At 295 to 300 (PGGGYQ) the chain is on the periplasmic side. The helical transmembrane segment at 301–321 (FGFSAFCIMLVVLIGGVAWWL) threads the bilayer. Over 322-327 (HRSKWL) the chain is Cytoplasmic.

The protein belongs to the CorA metal ion transporter (MIT) (TC 1.A.35) family.

The protein localises to the cell inner membrane. It catalyses the reaction Zn(2+)(out) + H(+)(out) = Zn(2+)(in) + H(+)(in). Its function is as follows. Zinc transporter. Acts as a Zn(2+):proton symporter, which likely mediates zinc ion uptake. The sequence is that of Zinc transport protein ZntB from Enterobacter sp. (strain 638).